A 263-amino-acid chain; its full sequence is Lens fiber major intrinsic protein (263 aa).

The Cytoplasmic portion of the chain corresponds to 1–9 (MWELRSASF). The chain crosses the membrane as a helical span at residues 10–29 (WRAIFAEFFATLFYVFFGLG). Residues 30 to 41 (ASLRWAPGPLHV) lie on the Extracellular side of the membrane. The helical transmembrane segment at 42–59 (LQVALAFGLALATLVQTV) threads the bilayer. Residues 60 to 61 (GH) are Cytoplasmic-facing. Positions 62–77 (ISGAHVNPAVTFAFLV) form an intramembrane region, discontinuously helical. An NPA 1 motif is present at residues 68–70 (NPA). The Cytoplasmic portion of the chain corresponds to 78 to 82 (GSQMS). The helical transmembrane segment at 83 to 106 (LLRAFCYIAAQLLGAVAGAAVLYS) threads the bilayer. Residues 107 to 127 (VTPPAVRGNLALNTLHAGVSV) lie on the Extracellular side of the membrane. A helical transmembrane segment spans residues 128 to 148 (GQATTVEIFLTLQFVLCIFAT). Residues 149 to 156 (YDERRNGR) lie on the Cytoplasmic side of the membrane. The helical transmembrane segment at 157–175 (MGSVALAVGFSLTLGHLFG) threads the bilayer. The Extracellular segment spans residues 176-178 (MYY). The discontinuously helical intramembrane region spans 179–193 (TGAGMNPARSFAPAI). Positions 184 to 186 (NPA) match the NPA 2 motif. Over 194–200 (LTRNFSN) the chain is Extracellular. A helical membrane pass occupies residues 201–222 (HWVYWVGPIIGGGLGSLLYDFL). The Cytoplasmic portion of the chain corresponds to 223-263 (LFPRLKSVSERLSILKGARPSDSNGQPEGTGEPVELKTQAL). The segment at 227–237 (LKSVSERLSIL) is interaction with CALM. Residues Ser235, Ser243, and Ser245 each carry the phosphoserine modification. Positions 240-263 (ARPSDSNGQPEGTGEPVELKTQAL) are disordered. A Deamidated asparagine modification is found at Asn246.

Belongs to the MIP/aquaporin (TC 1.A.8) family. Homotetramer; each monomer provides an independent water pore. Two homotetramers on opposing membranes can dimerize, forming a cell-cell junction. Interacts with CALM; the calcium-calmodulin/CALM complex interacts with the cytoplasmic domains of two aquaporins, leading to channel closure. Interacts with BFSP1 (via C-terminus); prevents calcium-dependent inhibition of the water channel activity. Subject to partial proteolytic cleavage in the eye lens core. Partial proteolysis promotes interactions between tetramers from adjoining membranes. Post-translationally, fatty acylated at Met-1 and Lys-238. The acyl modifications, in decreasing order of ion abundance, are: oleoyl (C18:1) &gt; palmitoyl (C16:0) &gt; stearoyl (C18:0) &gt; eicosenoyl (C20:1) &gt; dihomo-gamma-linolenoyl (C20:3) &gt; palmitoleoyl (C16:1) &gt; eicosadienoyl (C20:2).

It localises to the cell membrane. It is found in the cell junction. The catalysed reaction is H2O(in) = H2O(out). With respect to regulation, the water channel activity is inhibited by calcium through calmodulin/CALM. In terms of biological role, aquaporins form homotetrameric transmembrane channels, with each monomer independently mediating water transport across the plasma membrane along its osmotic gradient. Specifically expressed in lens fiber cells, this aquaporin is crucial for maintaining lens water homeostasis and transparency. Beyond water permeability, it also acts as a cell-to-cell adhesion molecule, forming thin junctions between lens fiber cells that are essential for maintaining the ordered structure and transparency of the lens. This Mus musculus (Mouse) protein is Lens fiber major intrinsic protein.